Reading from the N-terminus, the 240-residue chain is MIRSRQPLLDALGVDLPDELLSLALTHRSYAYENGGLPTNERLEFLGDAVLGLTITDALFHRHPDRSEGDLAKLRASVVNTQALADVARRLCAEGLGVHVLLGRGEANTGGADKSSILADGMESLLGAIYLQHGMEKAREVILRLFGPLLDAAPTLGAGLDWKTSLQELTAARGLGAPSYLVTSTGPDHDKEFTAVVVVMDSEYGSGVGRSKKEAEQKAAAAAWKALEVLDNAMPGKTSA.

An RNase III domain is found at S4–G134. Residue E44 participates in Mg(2+) binding. D48 is an active-site residue. Residues D120 and E123 each contribute to the Mg(2+) site. E123 is an active-site residue. The DRBM domain occupies D161 to V229.

The protein belongs to the ribonuclease III family. As to quaternary structure, homodimer. The cofactor is Mg(2+).

The protein resides in the cytoplasm. It carries out the reaction Endonucleolytic cleavage to 5'-phosphomonoester.. Its function is as follows. Digests double-stranded RNA. Involved in the processing of primary rRNA transcript to yield the immediate precursors to the large and small rRNAs (23S and 16S). Processes some mRNAs, and tRNAs when they are encoded in the rRNA operon. Processes pre-crRNA and tracrRNA of type II CRISPR loci if present in the organism. This Mycobacterium bovis (strain ATCC BAA-935 / AF2122/97) protein is Ribonuclease 3.